A 234-amino-acid polypeptide reads, in one-letter code: Zinc finger FYVE domain-containing protein 21 (234 aa).

The FYVE-type zinc-finger motif lies at 44–104 (DKECPRCMQC…QCADCALVSH (61 aa)). Residues C50, C53, C66, C69, C74, C77, C96, and C99 each contribute to the Zn(2+) site. Positions 107-234 (AEFYDKQLKV…TKLLYESRDQ (128 aa)) are PH-like.

Interacts with PTK2/FAK1. In terms of tissue distribution, widely expressed.

The protein resides in the cell junction. Its subcellular location is the focal adhesion. It localises to the cytoplasmic vesicle. The protein localises to the endosome. Plays a role in cell adhesion, and thereby in cell motility which requires repeated formation and disassembly of focal adhesions. Regulates microtubule-induced PTK2/FAK1 dephosphorylation, an event important for focal adhesion disassembly, as well as integrin beta-1/ITGB1 cell surface expression. This chain is Zinc finger FYVE domain-containing protein 21 (Zfyve21), found in Mus musculus (Mouse).